The primary structure comprises 89 residues: Ubiquinol-cytochrome-c reductase complex assembly factor 3 (89 aa).

The Mitochondrial matrix segment spans residues 1 to 7 (MEVARKA). A helical membrane pass occupies residues 8 to 28 (LVAVAVLGGGAGVGSILFALV). Residues 23–80 (ILFALVTPGELQKQSMLQEMPERDSRRRDEAVRTTELVMATLKDAAATKENVAWRRNW) are mediates lipid-binding. At 29-89 (TPGELQKQSM…WTVSGDGRSA (61 aa)) the chain is on the mitochondrial intermembrane side.

This sequence belongs to the UQCC3 family. In terms of assembly, associates with the ubiquinol-cytochrome c reductase complex (mitochondrial respiratory chain complex III(CIII) or cytochrome b-c1 complex). Interacts with UQCC1. Forms a complex, named COMC, composed of UQCC1, UQCC2; UQCC3 and UQCC4; mediates MT-CYB hemylation and association with the first nuclear-encoded complex III subunit UQCRQ. Post-translationally, probably cleaved by OMA1 under mitochondrial stress conditions.

It localises to the mitochondrion inner membrane. In terms of biological role, required for the assembly of the ubiquinol-cytochrome c reductase complex (mitochondrial respiratory chain complex III or cytochrome b-c1 complex), mediating cytochrome b recruitment and probably stabilization within the complex. Thereby, plays an important role in ATP production by mitochondria. Cardiolipin-binding protein, it may also control the cardiolipin composition of mitochondria membranes and their morphology. The polypeptide is Ubiquinol-cytochrome-c reductase complex assembly factor 3 (Mus musculus (Mouse)).